We begin with the raw amino-acid sequence, 222 residues long: UPF0758 protein YicR (222 aa).

Positions 100 to 222 (PLLSPEMTRE…YVSFAERGWI (123 aa)) constitute an MPN domain. Positions 171, 173, and 184 each coordinate Zn(2+). The short motif at 171-184 (HNHPSGCAEPSKAD) is the JAMM motif element.

Belongs to the UPF0758 family. YicR subfamily.

The sequence is that of UPF0758 protein YicR from Escherichia coli (strain 55989 / EAEC).